The chain runs to 132 residues: uncharacterized protein (132 aa).

2 consecutive transmembrane segments (helical) span residues 12 to 32 and 37 to 57; these read VIGFVVLFCVLELVFYLKKLY and LTLAVFGIFSLLFFLLYIPVL.

The protein localises to the cell membrane. This is an uncharacterized protein from Methanocaldococcus jannaschii (strain ATCC 43067 / DSM 2661 / JAL-1 / JCM 10045 / NBRC 100440) (Methanococcus jannaschii).